A 524-amino-acid chain; its full sequence is Bifunctional purine biosynthesis protein PurH (524 aa).

An MGS-like domain is found at 1-145 (MIKQALLSVS…KNHRDVTVIV (145 aa)).

This sequence belongs to the PurH family.

It carries out the reaction (6R)-10-formyltetrahydrofolate + 5-amino-1-(5-phospho-beta-D-ribosyl)imidazole-4-carboxamide = 5-formamido-1-(5-phospho-D-ribosyl)imidazole-4-carboxamide + (6S)-5,6,7,8-tetrahydrofolate. The catalysed reaction is IMP + H2O = 5-formamido-1-(5-phospho-D-ribosyl)imidazole-4-carboxamide. It participates in purine metabolism; IMP biosynthesis via de novo pathway; 5-formamido-1-(5-phospho-D-ribosyl)imidazole-4-carboxamide from 5-amino-1-(5-phospho-D-ribosyl)imidazole-4-carboxamide (10-formyl THF route): step 1/1. It functions in the pathway purine metabolism; IMP biosynthesis via de novo pathway; IMP from 5-formamido-1-(5-phospho-D-ribosyl)imidazole-4-carboxamide: step 1/1. The polypeptide is Bifunctional purine biosynthesis protein PurH (Cupriavidus metallidurans (strain ATCC 43123 / DSM 2839 / NBRC 102507 / CH34) (Ralstonia metallidurans)).